The chain runs to 340 residues: ATP-dependent 6-phosphofructokinase (340 aa).

Gly11 provides a ligand contact to ATP. Position 21 to 25 (21 to 25) interacts with ADP; that stretch reads RAVVR. ATP is bound by residues 72-73 and 102-105; these read RY and GDGS. Asp103 is a binding site for Mg(2+). 125 to 127 provides a ligand contact to substrate; that stretch reads TID. The Proton acceptor role is filled by Asp127. Residue Arg154 participates in ADP binding. Substrate contacts are provided by residues Arg162 and 169–171; that span reads MGR. ADP is bound by residues 185–187, Lys211, and 213–215; these read GAD and KNH. Substrate contacts are provided by residues Glu222, Arg244, and 250-253; that span reads HIQR.

This sequence belongs to the phosphofructokinase type A (PFKA) family. ATP-dependent PFK group I subfamily. Prokaryotic clade 'B1' sub-subfamily. As to quaternary structure, homotetramer. It depends on Mg(2+) as a cofactor.

It localises to the cytoplasm. It catalyses the reaction beta-D-fructose 6-phosphate + ATP = beta-D-fructose 1,6-bisphosphate + ADP + H(+). It participates in carbohydrate degradation; glycolysis; D-glyceraldehyde 3-phosphate and glycerone phosphate from D-glucose: step 3/4. Its activity is regulated as follows. Allosterically activated by ADP and other diphosphonucleosides, and allosterically inhibited by phosphoenolpyruvate. Its function is as follows. Catalyzes the phosphorylation of D-fructose 6-phosphate to fructose 1,6-bisphosphate by ATP, the first committing step of glycolysis. The chain is ATP-dependent 6-phosphofructokinase from Lactococcus lactis subsp. lactis (Streptococcus lactis).